A 508-amino-acid chain; its full sequence is Protection of telomeres protein tpz1 (508 aa).

Positions 2–223 are pot1-binding; the sequence is SNCLKHPWLE…ENTTHGIYLE (222 aa). Disordered regions lie at residues 159-178, 235-269, and 282-358; these read QEASLSQQEKPNDNTSNSRD, VSETPEVKQEDNDEDLDAYSWSSSTDSAGEIPSLP, and PPPF…QSHR. Over residues 327-347 the composition is skewed to polar residues; that stretch reads STEQLNSSLTIERSQSIQSTD. Residues 348 to 358 are compositionally biased toward basic and acidic residues; the sequence is SKQRVETQSHR. The tract at residues 379 to 508 is ccq1/poz1-binding; sequence TIDDSTGKLL…KKIEEFRNKS (130 aa).

In terms of assembly, interacts with ccq1, pot1 and poz1.

The protein resides in the chromosome. It localises to the telomere. It is found in the nucleus. Functionally, telomeric DNA-binding protein that is required to protect the 3'-end telomeric overhang and involved in telomere length regulation. recruits poz1 and ccq1 to telomeres, regulating telomere length negatively and positively respectively. The protein is Protection of telomeres protein tpz1 (tpz1) of Schizosaccharomyces pombe (strain 972 / ATCC 24843) (Fission yeast).